Reading from the N-terminus, the 29-residue chain is Cytochrome b6-f complex subunit 8 (29 aa).

The helical transmembrane segment at 3-23 (IISLAWAALMVVFTFSLSLVV) threads the bilayer.

It belongs to the PetN family. The 4 large subunits of the cytochrome b6-f complex are cytochrome b6, subunit IV (17 kDa polypeptide, PetD), cytochrome f and the Rieske protein, while the 4 small subunits are PetG, PetL, PetM and PetN. The complex functions as a dimer.

It localises to the plastid. The protein resides in the chloroplast thylakoid membrane. Its function is as follows. Component of the cytochrome b6-f complex, which mediates electron transfer between photosystem II (PSII) and photosystem I (PSI), cyclic electron flow around PSI, and state transitions. This is Cytochrome b6-f complex subunit 8 from Nicotiana tomentosiformis (Tobacco).